Consider the following 167-residue polypeptide: Gametocyte-specific factor 1 (167 aa).

Position 8 is a phosphoserine (Ser8). 2 consecutive CHHC U11-48K-type zinc fingers follow at residues 14-41 (LLQC…RKNH) and 48-75 (LATC…DDKS). Zn(2+) contacts are provided by Cys17, His23, His33, Cys37, Cys51, His57, His67, and Cys71.

It belongs to the UPF0224 (FAM112) family. In terms of tissue distribution, expressed abundantly in adult testis, at moderate levels in unfertilized eggs and ovaries and weakly in embryonic stem cells.

It localises to the cytoplasm. Its function is as follows. Required for spermatogenesis and is involved in the suppression of retrotransposon transcription in male germ cells. This Mus musculus (Mouse) protein is Gametocyte-specific factor 1.